The following is a 3498-amino-acid chain: Mediator of RNA polymerase II transcription subunit 12 (3498 aa).

Disordered regions lie at residues 365–456 (IKQH…HTDI), 497–764 (GGVG…EPEK), 2209–2576 (AKKR…AYMK), 2589–2620 (ENNR…EAYA), 2637–2889 (LRKE…KEKQ), and 2917–3498 (NVAG…PNQY). Over residues 368-394 (HEKRKAGSLKKSERRRRRGLSKNRPKK) the composition is skewed to basic residues. Positions 404–416 (SLDHDKVQIKQEP) are enriched in basic and acidic residues. Composition is skewed to polar residues over residues 424 to 440 (GQQS…SHQY) and 512 to 536 (SNPT…SASP). Residues 539-570 (SVDKENECEKKEDESKTKEKNKDKEKDKEKEK) adopt a coiled-coil conformation. Basic and acidic residues-rich tracts occupy residues 540–578 (VDKE…HTND) and 593–614 (ANDK…TGKE). A compositionally biased stretch (low complexity) spans 621-630 (SKTAKTSTSA). 3 stretches are compositionally biased toward basic and acidic residues: residues 691 to 719 (EVDK…KKAD), 738 to 764 (ESEK…EPEK), and 2209 to 2285 (AKKR…KRAS). Residues 2142–3498 (QTTRLDKVAK…YPNQQPPNQY (1357 aa)) are required for nuclear localization. Positions 2203–2290 (VIDEEEAKKR…EKRASDAAAA (88 aa)) form a coiled coil. Composition is skewed to low complexity over residues 2342 to 2360 (RADT…APIA) and 2409 to 2431 (LADA…SSMP). Residues 2395 to 2420 (RNLLNRKKEEKRNSLADASAAAAAAN) adopt a coiled-coil conformation. Positions 2444-2456 (QSAGATQQLQGMQ) are enriched in polar residues. Residues 2459 to 2479 (QMGGSMSGMNQNMGGMNQSMS) show a composition bias toward low complexity. Polar residues predominate over residues 2514–2530 (NRSSGPVSSETRQQIME). Composition is skewed to basic and acidic residues over residues 2547-2576 (QKQR…AYMK), 2589-2616 (ENNR…RAAE), and 2637-2724 (LRKE…EQQR). The span at 2725-2770 (RSQQNPYMNQQGQYSQQPPPSYQQSSYPNNYQPGQQGNQPPNYQQP) shows a compositional bias: low complexity. The segment covering 2771–2783 (SHQSMQQGHQAGY) has biased composition (polar residues). The span at 2784–2810 (QQTSNQMQMNMQQQQNRQQGGPQQSFS) shows a compositional bias: low complexity. Polar residues-rich tracts occupy residues 2816–2827 (NQPSQPGYSGYN), 2842–2852 (RNPFGNQQDMQ), 2868–2881 (HAQQ…QLSL), and 2926–2956 (GQQQ…SSNP). Residues 2957-2993 (QGGMQSYQQQQPVLGQPGPIQTGQSTQQQIPAQSQQQ) show a composition bias toward low complexity. Positions 2994 to 3009 (YNSGRPQMHTTPTKND) are enriched in polar residues. Over residues 3039–3100 (GQNVPGGYQQ…NVSQSQSAAQ (62 aa)) the composition is skewed to low complexity. Residues 3103 to 3127 (RPSQDSAYQQSGYNQTGNQSYQRPD) are compositionally biased toward polar residues. 2 stretches are compositionally biased toward low complexity: residues 3128–3184 (QQQQ…SAQY) and 3192–3223 (QGYD…QTQQ). Over residues 3231–3253 (SGYTANSGGSSNILNQSMEESGL) the composition is skewed to polar residues. The segment covering 3254 to 3311 (NQGFSGASSNASSQQGGSSQMQQSGYGMPGNQMQMQQNQKQQVQRGMPTGMGQTNMGQ) has biased composition (low complexity). Over residues 3312–3321 (SGMGQSGMGQ) the composition is skewed to gly residues. Low complexity-rich tracts occupy residues 3336-3356 (QGQQ…NQRG) and 3370-3408 (QQQH…QGQQ). Residues 3414 to 3425 (PSQQQSGAAYSN) show a composition bias toward polar residues. Positions 3426-3436 (QMQFQGVRQGQ) are enriched in low complexity. The segment covering 3437–3446 (QGMGGMGGSG) has biased composition (gly residues). A compositionally biased stretch (low complexity) spans 3447 to 3498 (QQQPQTQPHGSNQYYQQQQDQRMQQQPQQPGQQQQHGYGMGQYPNQQPPNQY).

Belongs to the Mediator complex subunit 12 family. Component of the Mediator complex. Ubiquitously expressed.

It localises to the nucleus. Its function is as follows. Component of the Mediator complex, a coactivator involved in regulated gene transcription of nearly all RNA polymerase II-dependent genes. Mediator functions as a bridge to convey information from gene-specific regulatory proteins to the basal RNA polymerase II transcription machinery. Mediator is recruited to promoters by direct interactions with regulatory proteins and serves as a scaffold for the assembly of a functional preinitiation complex with RNA polymerase II and the general transcription factors. Functions downstream of let-60 during vulval induction. Required for asymmetric division of T-cells and for hypodermal development. This Caenorhabditis elegans protein is Mediator of RNA polymerase II transcription subunit 12 (dpy-22).